The chain runs to 468 residues: Mitochondrial dynamics protein MID51 (468 aa).

At 1–29 (MAGVNGDRKGKKDDNGLGTAIDFVLSNAK) the chain is on the mitochondrial intermembrane side. A helical transmembrane segment spans residues 30–47 (LVLGVGGAAMLGIATLAV). Residues 48–468 (KRMYDRALSA…SDPESLLRTV (421 aa)) are Cytoplasmic-facing. Residues 50-196 (MYDRALSAPS…LSGSLYDDLQ (147 aa)) form a dimerization region. The segment at 56–123 (SAPSSPTKAD…RGLARGGRPA (68 aa)) is disordered. Polar residues predominate over residues 91 to 108 (QNVSRSLQTLPTSSSSFK). The segment at 161-170 (AALDICAELR) is important for interaction with DNM1L. S188, S190, and H202 together coordinate ADP. Positions 235–244 (RRENLEYFPR) are important for interaction with DNM1L. S344, R346, and K372 together coordinate ADP.

This sequence belongs to the MID49/MID51 family. In terms of assembly, homodimer.

The protein resides in the mitochondrion outer membrane. Its function is as follows. Mitochondrial outer membrane protein which regulates mitochondrial fission/fusion dynamics. Promotes the recruitment and association of the fission mediator dynamin-related protein 1 (DNM1L) to the mitochondrial surface independently of the mitochondrial fission FIS1 and MFF proteins. Regulates DNM1L GTPase activity and DNM1L oligomerization. This is Mitochondrial dynamics protein MID51 (mief1) from Danio rerio (Zebrafish).